The sequence spans 567 residues: Myo-inositol transporter 1 (567 aa).

Residues 1-88 lie on the Cytoplasmic side of the membrane; it reads MSARPAQPNI…KFVWMLVSAA (88 aa). Residues 14 to 42 form a disordered region; sequence IRTSLSGYPSPTHSGSSTPASLEFSDGRL. The segment covering 16–33 has biased composition (polar residues); sequence TSLSGYPSPTHSGSSTPA. The helical transmembrane segment at 89 to 109 threads the bilayer; sequence AISGLLFGYDTAAISGMLVII. Topologically, residues 110–123 are extracellular; that stretch reads KDDLGTILSSWQKE. Residues 124–144 form a helical membrane-spanning segment; the sequence is VITSATTLGALLGGLAAGCVS. The Cytoplasmic portion of the chain corresponds to 145–150; it reads DFTGRR. The helical transmembrane segment at 151-171 threads the bilayer; it reads LVIVFANVAFIGGSICQAACH. At 172 to 180 the chain is on the extracellular side; sequence TVAAMIAGR. The helical transmembrane segment at 181 to 201 threads the bilayer; it reads FIVGLGVGLASCIVPLYIGEL. Residues 202–209 lie on the Cytoplasmic side of the membrane; the sequence is APTMIRGR. Residues 210–230 form a helical membrane-spanning segment; sequence LVTINCVAVTLGQVVAYAIGA. The Extracellular segment spans residues 231-240; that stretch reads SFQNVHNGWR. The helical transmembrane segment at 241–261 threads the bilayer; it reads WIVGLGAMPSFVQLAAIGFLP. Topologically, residues 262 to 343 are cytoplasmic; the sequence is ESPRILLLRS…IGCGLQAAQQ (82 aa). The helical transmembrane segment at 344 to 364 threads the bilayer; sequence LCGFNTLMYYSATIFAMLGFN. Asparagine 365 is a glycosylation site (N-linked (GlcNAc...) asparagine). Over 365–367 the chain is Extracellular; sequence NAT. Residues 368-388 form a helical membrane-spanning segment; it reads AVGLIVATVNVLFTLVALKIV. Residues 389–397 are Cytoplasmic-facing; it reads DPVGRRRTM. Residues 398–418 form a helical membrane-spanning segment; sequence LFTLPIMILALVFAAIFFYYL. Over 419–435 the chain is Extracellular; sequence TLSTNGILIEDHDYPRS. Residues 436–456 form a helical membrane-spanning segment; sequence LSILVLLSMLLYVAGYATGLG. Topologically, residues 457 to 476 are cytoplasmic; the sequence is NIPWQQGELFRLEVRGIGTS. The helical transmembrane segment at 477–497 threads the bilayer; it reads ICTAVNWSCNMLIAGTFLSLM. Residues 498 to 503 are Extracellular-facing; it reads DAATPS. The helical transmembrane segment at 504–524 threads the bilayer; that stretch reads GAFGIYAGFCVIGWVFCWMLY. The Cytoplasmic portion of the chain corresponds to 525 to 567; it reads PETSGLSLEEVYFVFEEGFGIKKSQQLRKQKLVEAAKLKAIFE.

This sequence belongs to the major facilitator superfamily. Sugar transporter (TC 2.A.1.1) family.

It localises to the cell membrane. It carries out the reaction myo-inositol(out) + H(+)(out) = myo-inositol(in) + H(+)(in). Its function is as follows. May function as a transporter or as a sensor for myo-inositol. In Cryptococcus neoformans var. grubii serotype A (strain H99 / ATCC 208821 / CBS 10515 / FGSC 9487) (Filobasidiella neoformans var. grubii), this protein is Myo-inositol transporter 1.